A 310-amino-acid chain; its full sequence is Methionyl-tRNA formyltransferase (310 aa).

Position 109–112 (109–112 (SLLP)) interacts with (6S)-5,6,7,8-tetrahydrofolate.

Belongs to the Fmt family.

It carries out the reaction L-methionyl-tRNA(fMet) + (6R)-10-formyltetrahydrofolate = N-formyl-L-methionyl-tRNA(fMet) + (6S)-5,6,7,8-tetrahydrofolate + H(+). Functionally, attaches a formyl group to the free amino group of methionyl-tRNA(fMet). The formyl group appears to play a dual role in the initiator identity of N-formylmethionyl-tRNA by promoting its recognition by IF2 and preventing the misappropriation of this tRNA by the elongation apparatus. The chain is Methionyl-tRNA formyltransferase from Pseudomonas putida (strain ATCC 47054 / DSM 6125 / CFBP 8728 / NCIMB 11950 / KT2440).